Reading from the N-terminus, the 349-residue chain is Anthranilate phosphoribosyltransferase (349 aa).

5-phospho-alpha-D-ribose 1-diphosphate is bound by residues Gly87, 90–91 (GD), Thr95, 97–100 (NIST), 115–123 (KHGNRSVSS), and Ser127. An anthranilate-binding site is contributed by Gly87. Ser99 provides a ligand contact to Mg(2+). Asn118 serves as a coordination point for anthranilate. An anthranilate-binding site is contributed by Arg173. Mg(2+) contacts are provided by Asp231 and Glu232.

It belongs to the anthranilate phosphoribosyltransferase family. As to quaternary structure, homodimer. Requires Mg(2+) as cofactor.

The catalysed reaction is N-(5-phospho-beta-D-ribosyl)anthranilate + diphosphate = 5-phospho-alpha-D-ribose 1-diphosphate + anthranilate. It functions in the pathway amino-acid biosynthesis; L-tryptophan biosynthesis; L-tryptophan from chorismate: step 2/5. Functionally, catalyzes the transfer of the phosphoribosyl group of 5-phosphorylribose-1-pyrophosphate (PRPP) to anthranilate to yield N-(5'-phosphoribosyl)-anthranilate (PRA). The protein is Anthranilate phosphoribosyltransferase of Shewanella loihica (strain ATCC BAA-1088 / PV-4).